A 270-amino-acid polypeptide reads, in one-letter code: Type III pantothenate kinase (270 aa).

ATP is bound at residue 19–26; it reads DIGNTSTT. Substrate contacts are provided by residues Tyr109 and 116 to 119; that span reads GADR. The active-site Proton acceptor is the Asp118. Asp139 contributes to the K(+) binding site. Thr142 serves as a coordination point for ATP. Residue Thr194 participates in substrate binding.

Belongs to the type III pantothenate kinase family. In terms of assembly, homodimer. NH4(+) serves as cofactor. It depends on K(+) as a cofactor.

The protein resides in the cytoplasm. The catalysed reaction is (R)-pantothenate + ATP = (R)-4'-phosphopantothenate + ADP + H(+). Its pathway is cofactor biosynthesis; coenzyme A biosynthesis; CoA from (R)-pantothenate: step 1/5. Catalyzes the phosphorylation of pantothenate (Pan), the first step in CoA biosynthesis. The chain is Type III pantothenate kinase from Chlorobaculum tepidum (strain ATCC 49652 / DSM 12025 / NBRC 103806 / TLS) (Chlorobium tepidum).